A 647-amino-acid polypeptide reads, in one-letter code: MALAMLRDWCRWMGANAERSLLILGIPDDCKEHEFQEAVRAALSPLGRYRVLTKHFRKELGAKAALVEFAEYLNRSLIPHQIPGNGGPWKVIFLPQVPVIEFQDMPSFPAQPQGQAVAKAAGEGGGAGEAGGVGEVGAAGEAGGTGEAGATGEAGAAGEAGGAGEAGGVGEAGAAGEAGGAGEAGAAGEGGAAGEAGGAGEAGGVGEAGAAGEAGGAGEAGGVGEAGAAGEAGGAGEAGAAGEAGGAGEGRAAGEAGAAGEAGAVGEAGAAGEAGAVGEAGAAGEAGAVGEAGGTNVTKAWVQPWRCTLQPVLENRAYRELRPFSRREQPGCEEESFESWVEHAKDMLQLWCHASEREKKRWLLESLGGPALEVVSGLLEEDTNLSALDCLAALGQVFRNQDTRMTSRLKFLTCTQGPQEGLFAFVVRLEGLLQRAVEKGAVCPALANYLRLQQVLSWARPSEALQDTLRGMQLEKRPPGFLGLLRLIREMEAWAAFPARSQQGVAWAAAPVESEDPAAAQASPAQGNASEAGPGAEDAAEAASATKEAARGAPAAGEGESAPAGPEGLGQARPIEVPWGSSPARMSSAVWVFPRGLSWGPEGLIQVRGQEARKPPLEGLQTILEEPENEDEDGAGDEGQPKSSQGK.

4 disordered regions span residues 111–199, 227–254, 508–580, and 608–647; these read QPQG…AGGA, GAAGEAGGAGEAGAAGEAGGAGEGRAAG, AAAP…VPWG, and RGQEARKPPLEGLQTILEEPENEDEDGAGDEGQPKSSQGK. Gly residues-rich tracts occupy residues 122–149, 158–199, and 227–251; these read GEGGGAGEAGGVGEVGAAGEAGGTGEAG, GEAG…AGGA, and GAAGEAGGAGEAGAAGEAGGAGEGR. Low complexity predominate over residues 517 to 570; the sequence is PAAAQASPAQGNASEAGPGAEDAAEAASATKEAARGAPAAGEGESAPAGPEGLG. Residues 625 to 636 are compositionally biased toward acidic residues; that stretch reads EEPENEDEDGAG.

This Homo sapiens (Human) protein is Paraneoplastic antigen Ma6E.